Here is a 254-residue protein sequence, read N- to C-terminus: Matrix protein (254 aa).

It belongs to the paramyxoviruses M protein family. Interacts with glycoprotein G (via N-terminus), and protein N. Interacts with protein M2-1; this interaction mediates the association between proteins M and N.

It localises to the virion. The protein localises to the host cytoplasm. The protein resides in the host nucleus. It is found in the host cell membrane. Has a crucial role in virus assembly and budding. The matrix interacts with the RNP complex and this association serves two functions: facilitate virion assembly and inhibit the viral transcriptase activity. Early in infection, M is localized to the nucleus and may inhibit host cell transcription. Later on, M can associate with lipid rafts supposely by interacting with the cytoskeleton and with the cytoplasmic tail of glycoprotein G. The binding of M to host membrane is stabilized by the surface expression of the viral glycoproteins. These interactions may allow virus formation by mediating association of the nucleocapsid with the nascent envelope. This chain is Matrix protein (M), found in Avian metapneumovirus (isolate Canada goose/Minnesota/15a/2001) (AMPV).